Consider the following 270-residue polypeptide: Regulatory protein RecX (270 aa).

Belongs to the RecX family.

The protein localises to the cytoplasm. Modulates RecA activity. The chain is Regulatory protein RecX from Bacillus cereus (strain B4264).